The sequence spans 145 residues: Putative pre-16S rRNA nuclease (145 aa).

It belongs to the YqgF nuclease family.

The protein localises to the cytoplasm. Could be a nuclease involved in processing of the 5'-end of pre-16S rRNA. This chain is Putative pre-16S rRNA nuclease, found in Microcystis aeruginosa (strain NIES-843 / IAM M-2473).